The sequence spans 396 residues: MQTTSIKTASGMYINYFFLGMVNIILASNMSSLTKQWNTDPTGISYVIAAIGFGKLLTYGISGVLSDKIGRKPLVVASAGIMAVFLVGIPLSPSYELAFVFALLAGVANSAMDAGTYPALTELFPSASGSANVLVKAFMSVGAALLPLLITFLADHSMFYGFAFYLPAAVYLLNIIYLSTLSFPKKHKKPTNSGQQESPVFLSEPVFQKEGTALIIIGFTSTALFTVSQIWLPSYAQKAAGLAESASVQLLSYYSIGSLASVLLLAVLLNRWVKPVFITLLYPIITLCTLAVMLTVHIPVVLDITAFFLGFSTAGVFQITITLMTELFWKRKGTVTGIVATASSLASILLPIATGLIAKAGGIAHIFIFDFGIAVIGTAAAAFLYYRYKKLTGAQA.

A run of 12 helical transmembrane segments spans residues 8 to 28, 44 to 64, 73 to 93, 97 to 117, 133 to 153, 158 to 178, 213 to 233, 250 to 270, 276 to 296, 304 to 324, 338 to 358, and 363 to 383; these read TASG…ILAS, ISYV…ISGV, PLVV…PLSP, LAFV…AGTY, VLVK…ITFL, MFYG…IIYL, ALII…IWLP, LLSY…VLLN, VFIT…MLTV, ITAF…ITLM, IVAT…GLIA, and IAHI…AAAF.

The protein belongs to the major facilitator superfamily.

Its subcellular location is the cell membrane. This is an uncharacterized protein from Bacillus subtilis (strain 168).